Here is a 1440-residue protein sequence, read N- to C-terminus: Pentatricopeptide repeat-containing protein At3g18110, chloroplastic (1440 aa).

The N-terminal 44 residues, 1-44, are a transit peptide targeting the chloroplast; it reads MAVSAGALAFPALSVRATLNPEIKDEQANISSTTSSSQKFTYSR. The span at 63-72 shows a compositional bias: polar residues; it reads TPSQTLSSPV. The segment at 63 to 84 is disordered; the sequence is TPSQTLSSPVSPIAGTPDSGDV. PPR repeat units follow at residues 224 to 258, 259 to 295, 296 to 330, 331 to 365, 366 to 400, 401 to 431, 437 to 471, 472 to 506, 507 to 541, 542 to 572, 608 to 638, 643 to 678, 680 to 714, 715 to 749, 751 to 785, 786 to 820, 821 to 855, 856 to 890, 891 to 925, 926 to 960, 961 to 995, 996 to 1030, 1031 to 1065, 1066 to 1100, and 1101 to 1135; these read RVQV…GCVP, DLIS…GLRP, DAIT…RCQP, DLWT…GFFP, DAVT…GFGK, DEMT…MKGL, DAIT…GIKP, TLQT…GTKP, DNLA…GHTP, SYTL…MEEL, ENDT…LKEH, KRLI…GWCF, SSTM…GCEA, SESV…GFHF, CSPM…GRTP, DLKT…GPSP, TVES…GFKI, SKSS…GYLP, TIRL…NFKV, ELAI…GLEP, DETT…GLDP, KLDT…GLKL, DRSF…GIEP, TLAT…EVEL, and TTLP…GLEP. The tract at residues 1419–1440 is disordered; that stretch reads KKKKMGNETNGINTRRKFVRSK.

Belongs to the PPR family. P subfamily.

It localises to the plastid. The protein resides in the chloroplast. Its function is as follows. May play a role in embryogenesis. This is Pentatricopeptide repeat-containing protein At3g18110, chloroplastic (EMB1270) from Arabidopsis thaliana (Mouse-ear cress).